The sequence spans 433 residues: MYGALVTAADSIRTGLGASLLAGFRPRTGAPSTATILRSALWPAAVLSVLHRSIVLTTNGNITDDFKPVYRAVLNFRRGWDIYNEHFDYVDPHYLYPPGGTLLMAPFGYLPFAPSRYLFISINTAAILVAAYLLLRMFNFTLTSVAAPALILAMFATETVTNTLVFTNINGCILLLEVLFLRWLLDGRASRQWCGGLAIGLTLVLKPLLGPLLLLPLLNRQWRALVAAVVVPVVVNVAALPLVSDPMSFFTRTLPYILGTRDYFNSSILGNGVYFGLPTWLILFLRILFTAITFGALWLLYRYYRTGDPLFWFTTSSGVLLLWSWLVMSLAQGYYSMMLFPFLMTVVLPNSVIRNWPAWLGVYGFMTLDRWLLFNWMRWGRALEYLKITYGWSLLLIVTFTVLYFRYLDAKADNRLDGGIDPAWLTPEREGQR.

A run of 10 helical transmembrane segments spans residues 118-138 (LFISINTAAILVAAYLLLRMF), 140-160 (FTLTSVAAPALILAMFATETV), 164-184 (LVFTNINGCILLLEVLFLRWL), 197-217 (LAIGLTLVLKPLLGPLLLLPL), 224-244 (ALVAAVVVPVVVNVAALPLVS), 280-300 (WLILFLRILFTAITFGALWLL), 310-330 (LFWFTTSSGVLLLWSWLVMSL), 333-353 (GYYSMMLFPFLMTVVLPNSVI), 356-376 (WPAWLGVYGFMTLDRWLLFNW), and 385-405 (YLKITYGWSLLLIVTFTVLYF).

The protein belongs to the glycosyltransferase 87 family.

The protein resides in the cell membrane. It carries out the reaction Adds an alpha-D-arabinofuranosyl group from trans,octacis-decaprenylphospho-beta-D-arabinofuranose at the 3-O-position of an alpha-(1-&gt;5)-arabinofuranan chain attached to a beta-(1-&gt;5)-galactofuranan chain.. The protein operates within cell wall biogenesis; cell wall polysaccharide biosynthesis. Functionally, involved in the biosynthesis of the arabinogalactan (AG) region of the mycolylarabinogalactan-peptidoglycan (mAGP) complex, an essential component of the mycobacterial cell wall. Catalyzes the addition of an arabinofuranosyl (Araf) residue from the sugar donor beta-D-arabinofuranosyl-1-monophosphoryldecaprenol (DPA) on the C-3 of an alpha-(1-&gt;5)-linked Araf from the arabinan backbone of AG. The protein is Alpha-(1-&gt;3)-arabinofuranosyltransferase (aftC) of Mycobacterium tuberculosis (strain CDC 1551 / Oshkosh).